Here is a 435-residue protein sequence, read N- to C-terminus: Diguanylate cyclase TpbB (435 aa).

Topologically, residues 1–22 (MNRRRRYTGSNPSLRRVLYRAH) are cytoplasmic. A helical membrane pass occupies residues 23–43 (LGVALVAVFTAGLAVTLVGLL). Residues 44–154 (TLRAYADPNQ…VKGSGGSLLR (111 aa)) are Periplasmic-facing. The helical transmembrane segment at 155 to 175 (FLLTGFAGMVLCLLLTALGAF) threads the bilayer. Residues 176–435 (YLSRRLVRGI…DSATPEAPPK (260 aa)) are Cytoplasmic-facing. Residues 183-236 (RGIVGPLDQLAKVAHTVRRERDFEKRVPEAGIAELSQLGEDFNALLDELESWQA) enclose the HAMP domain. A GGDEF domain is found at 279 to 415 (EQLAVLFIDS…GSRRLAELND (137 aa)). Residues Ser-288 and Asp-330 each contribute to the Mg(2+) site. The Proton acceptor role is filled by Asp-330. Basic and acidic residues predominate over residues 414-426 (NDPRILQEEKEID). The tract at residues 414-435 (NDPRILQEEKEIDSATPEAPPK) is disordered.

Requires Mg(2+) as cofactor. In terms of processing, phosphorylated at both Tyr residues and Ser/Thr residues. Dephosphorylated and inactivated by TpbA.

Its subcellular location is the cell inner membrane. The catalysed reaction is 2 GTP = 3',3'-c-di-GMP + 2 diphosphate. It functions in the pathway purine metabolism; 3',5'-cyclic di-GMP biosynthesis. Its activity is regulated as follows. Activity is tightly controlled by YfiR, a small periplasmic protein, and the OmpA/Pal-like outer-membrane lipoprotein YfiB. Diguanylate cyclase activity is inhibited by the specific interaction of YfiR with the TpbB periplasmic domain and is activated by YfiB, which releases the YfiR-mediated repression through sequestration of YfiR to the outer membrane. Activity is also controlled by dephosphorylation of the periplasmic domain by the tyrosine phosphatase TpbA. Its function is as follows. Catalyzes the synthesis of cyclic-di-GMP (c-di-GMP) via the condensation of 2 GTP molecules. Important for the regulation of biofilm maintenance when exposed to peroxide. Part of the YfiB-TpbB-YfiR (or yfiBNR) system, encoding a tripartite signaling module that modulates intracellular c-di-GMP levels. The system is a key regulator of the small colony variant (SCV) phenotype, and plays an important role in biofilm formation and in vivo persistence. The c-di-GMP produced by TpbB/YfiN stimulates the production of the Pel and Psl exopolysaccharides, which promotes surface attachment, generates an SCV phenotype and confers resistance against phagocytosis. This is Diguanylate cyclase TpbB from Pseudomonas aeruginosa (strain UCBPP-PA14).